We begin with the raw amino-acid sequence, 133 residues long: Putative pre-16S rRNA nuclease (133 aa).

It belongs to the YqgF nuclease family.

The protein localises to the cytoplasm. Its function is as follows. Could be a nuclease involved in processing of the 5'-end of pre-16S rRNA. The polypeptide is Putative pre-16S rRNA nuclease (Dehalococcoides mccartyi (strain ATCC BAA-2266 / KCTC 15142 / 195) (Dehalococcoides ethenogenes (strain 195))).